Consider the following 341-residue polypeptide: Limbic system-associated membrane protein (341 aa).

Residues 1–28 form the signal peptide; sequence MVGRVQPDRKQLPLVLLRLLCLLPTGLP. Ig-like domains lie at 29–122, 132–214, and 219–304; these read VRSV…PKTS, PKIS…VKVT, and PTIT…ASLV. Residues N40 and N66 are each glycosylated (N-linked (GlcNAc...) asparagine). C53 and C111 are joined by a disulfide. Phosphotyrosine is present on Y94. N136 and N148 each carry an N-linked (GlcNAc...) asparagine glycan. 2 cysteine pairs are disulfide-bonded: C153–C197 and C239–C290. N-linked (GlcNAc...) asparagine glycosylation is found at N279, N287, and N300.

The protein belongs to the immunoglobulin superfamily. IgLON family.

Its subcellular location is the cell membrane. Its function is as follows. Mediates selective neuronal growth and axon targeting. Contributes to the guidance of developing axons and remodeling of mature circuits in the limbic system. Essential for normal growth of the hippocampal mossy fiber projection. The protein is Limbic system-associated membrane protein (Lsamp) of Mus musculus (Mouse).